The primary structure comprises 749 residues: 5-methyltetrahydropteroyltriglutamate--homocysteine methyltransferase (749 aa).

5-methyltetrahydropteroyltri-L-glutamate-binding positions include 15-18 (RELK) and K114. Residues 425 to 427 (IGS) and E478 each bind L-homocysteine. Residues 425 to 427 (IGS) and E478 each bind L-methionine. W555 serves as a coordination point for 5-methyltetrahydropteroyltri-L-glutamate. D593 serves as a coordination point for L-homocysteine. An L-methionine-binding site is contributed by D593. 5-methyltetrahydropteroyltri-L-glutamate is bound at residue E599. Zn(2+) is bound by residues H636, C638, and E660. The active-site Proton donor is the H689. C721 lines the Zn(2+) pocket.

This sequence belongs to the vitamin-B12 independent methionine synthase family. It depends on Zn(2+) as a cofactor.

The catalysed reaction is 5-methyltetrahydropteroyltri-L-glutamate + L-homocysteine = tetrahydropteroyltri-L-glutamate + L-methionine. Its pathway is amino-acid biosynthesis; L-methionine biosynthesis via de novo pathway; L-methionine from L-homocysteine (MetE route): step 1/1. In terms of biological role, catalyzes the transfer of a methyl group from 5-methyltetrahydrofolate to homocysteine resulting in methionine formation. This Streptococcus pneumoniae serotype 4 (strain ATCC BAA-334 / TIGR4) protein is 5-methyltetrahydropteroyltriglutamate--homocysteine methyltransferase.